The primary structure comprises 370 residues: Aminomethyltransferase (370 aa).

Belongs to the GcvT family. The glycine cleavage system is composed of four proteins: P, T, L and H.

It carries out the reaction N(6)-[(R)-S(8)-aminomethyldihydrolipoyl]-L-lysyl-[protein] + (6S)-5,6,7,8-tetrahydrofolate = N(6)-[(R)-dihydrolipoyl]-L-lysyl-[protein] + (6R)-5,10-methylene-5,6,7,8-tetrahydrofolate + NH4(+). Its function is as follows. The glycine cleavage system catalyzes the degradation of glycine. In Prochlorococcus marinus (strain AS9601), this protein is Aminomethyltransferase.